The following is a 126-amino-acid chain: Aspartate 1-decarboxylase (126 aa).

Catalysis depends on Ser-25, which acts as the Schiff-base intermediate with substrate; via pyruvic acid. Ser-25 bears the Pyruvic acid (Ser) mark. Thr-57 contributes to the substrate binding site. Residue Tyr-58 is the Proton donor of the active site. Substrate is bound at residue 73-75; the sequence is GAA.

Belongs to the PanD family. As to quaternary structure, heterooctamer of four alpha and four beta subunits. The cofactor is pyruvate. In terms of processing, is synthesized initially as an inactive proenzyme, which is activated by self-cleavage at a specific serine bond to produce a beta-subunit with a hydroxyl group at its C-terminus and an alpha-subunit with a pyruvoyl group at its N-terminus.

Its subcellular location is the cytoplasm. It catalyses the reaction L-aspartate + H(+) = beta-alanine + CO2. It participates in cofactor biosynthesis; (R)-pantothenate biosynthesis; beta-alanine from L-aspartate: step 1/1. Functionally, catalyzes the pyruvoyl-dependent decarboxylation of aspartate to produce beta-alanine. The sequence is that of Aspartate 1-decarboxylase from Methylococcus capsulatus (strain ATCC 33009 / NCIMB 11132 / Bath).